Consider the following 500-residue polypeptide: Ferulic acid decarboxylase 1 (500 aa).

Residues Asn168, His191, and Glu233 each coordinate Mn(2+). Residues 168-173, 190-191, and Glu233 contribute to the prenylated FMN site; these read NWSIAR and QH. Glu282 acts as the Proton donor in catalysis. Lys391 is a binding site for prenylated FMN.

This sequence belongs to the UbiD family. UbiD-like/FDC subfamily. As to quaternary structure, homodimer. May form higher order oligomers. It depends on Mn(2+) as a cofactor. Prenylated FMN is required as a cofactor.

The protein localises to the cytoplasm. The catalysed reaction is (E)-4-coumarate + H(+) = 4-vinylphenol + CO2. The enzyme catalyses (E)-cinnamate + H(+) = styrene + CO2. It carries out the reaction (E)-ferulate + H(+) = 2-methoxy-4-vinylphenol + CO2. In terms of biological role, catalyzes the reversible decarboxylation of aromatic carboxylic acids like ferulic acid, p-coumaric acid or cinnamic acid, producing the corresponding vinyl derivatives 4-vinylphenol, 4-vinylguaiacol, and styrene, respectively, which play the role of aroma metabolites. This is Ferulic acid decarboxylase 1 from Aspergillus niger (strain ATCC MYA-4892 / CBS 513.88 / FGSC A1513).